The chain runs to 230 residues: Demethylmenaquinone methyltransferase (230 aa).

Residues Thr-62, Asp-80, 100 to 101 (DA), and Ser-117 each bind S-adenosyl-L-methionine.

The protein belongs to the class I-like SAM-binding methyltransferase superfamily. MenG/UbiE family.

It carries out the reaction a 2-demethylmenaquinol + S-adenosyl-L-methionine = a menaquinol + S-adenosyl-L-homocysteine + H(+). The protein operates within quinol/quinone metabolism; menaquinone biosynthesis; menaquinol from 1,4-dihydroxy-2-naphthoate: step 2/2. Functionally, methyltransferase required for the conversion of demethylmenaquinol (DMKH2) to menaquinol (MKH2). The protein is Demethylmenaquinone methyltransferase of Mycolicibacterium paratuberculosis (strain ATCC BAA-968 / K-10) (Mycobacterium paratuberculosis).